The primary structure comprises 417 residues: MLEQMGIAAKQASYKLAQLSSREKNRVLEKIADELEAQSESILNANAQDVADARANGLSEAMLDRLALTPARLKGIADDVRQVCNLADPVGQVIDGGVLDSGLRLERRRVPLGVIGVIYEARPNVTVDVASLCLKTGNAVILRGGKETCRTNAATVAVIQDALKSCGLPAGAVQAIDNPDRALVSEMLRMDKYIDMLIPRGGAGLHKLCREQSTIPVITGGIGVCHIYVDESAEIAEVLKVIVNAKTQRPSTCNTVETLLVNKNIADSFLPALSKQMAESGVTLHADAAALAQLQTGPAKVVAVKAEEYDDEFLSLDLNVKIVSDLDDAIAHIREHGTQHSDAILTRDMRNAQRFVNEVDSSAVYVNASTRFTDGGQFGLGAEVAVSTQKLHARGPMGLEALTTYKWIGIGDYTIRA.

The protein belongs to the gamma-glutamyl phosphate reductase family.

It is found in the cytoplasm. It catalyses the reaction L-glutamate 5-semialdehyde + phosphate + NADP(+) = L-glutamyl 5-phosphate + NADPH + H(+). Its pathway is amino-acid biosynthesis; L-proline biosynthesis; L-glutamate 5-semialdehyde from L-glutamate: step 2/2. Its function is as follows. Catalyzes the NADPH-dependent reduction of L-glutamate 5-phosphate into L-glutamate 5-semialdehyde and phosphate. The product spontaneously undergoes cyclization to form 1-pyrroline-5-carboxylate. This Escherichia coli O6:H1 (strain CFT073 / ATCC 700928 / UPEC) protein is Gamma-glutamyl phosphate reductase.